Here is a 392-residue protein sequence, read N- to C-terminus: Chaperone protein DnaJ (392 aa).

In terms of domain architecture, J spans 2-67 (DYYDVLGVSK…QKRESYDRYG (66 aa)). Residues 149 to 227 (GVEKELLVSG…CRGQGRIKDK (79 aa)) form a CR-type zinc finger. Positions 162, 165, 179, 182, 201, 204, 215, and 218 each coordinate Zn(2+). CXXCXGXG motif repeat units lie at residues 162–169 (CETCLGSG), 179–186 (CDRCKGSG), 201–208 (CPECGGEG), and 215–222 (CSNCRGQG).

It belongs to the DnaJ family. In terms of assembly, homodimer. Zn(2+) is required as a cofactor.

The protein resides in the cytoplasm. Participates actively in the response to hyperosmotic and heat shock by preventing the aggregation of stress-denatured proteins and by disaggregating proteins, also in an autonomous, DnaK-independent fashion. Unfolded proteins bind initially to DnaJ; upon interaction with the DnaJ-bound protein, DnaK hydrolyzes its bound ATP, resulting in the formation of a stable complex. GrpE releases ADP from DnaK; ATP binding to DnaK triggers the release of the substrate protein, thus completing the reaction cycle. Several rounds of ATP-dependent interactions between DnaJ, DnaK and GrpE are required for fully efficient folding. Also involved, together with DnaK and GrpE, in the DNA replication of plasmids through activation of initiation proteins. In Chlamydia caviae (strain ATCC VR-813 / DSM 19441 / 03DC25 / GPIC) (Chlamydophila caviae), this protein is Chaperone protein DnaJ.